The chain runs to 319 residues: Ubiquinone biosynthesis protein COQ9, mitochondrial (319 aa).

Residues 1-45 constitute a mitochondrion transit peptide; the sequence is MAATVAFSGVLRRAGWRLLQLRCLPVPRCRPALAPRAFRASAMQL. Positions 17-32 match the SIFI-degron motif; the sequence is RLLQLRCLPVPRCRPA. The segment at 46–99 is disordered; it reads RSLDQQKDQPPPSSSQQQSEAQGAEEPNPEALRSPPRYTDQGGEEEEDYESEEQ. Residues 87-98 are compositionally biased toward acidic residues; that stretch reads GGEEEEDYESEE. At Lys-176 the chain carries N6-acetyllysine. A 1,2-diacylglycero-3-phosphoethanolamine is bound at residue Arg-245.

The protein belongs to the COQ9 family. As to quaternary structure, homodimer. Heterodimer; two heterodimers of COQ7:COQ9 come together on the same side of the lipid pseudo-bilayer and form a curved tetramer with a hydrophobic surface suitable for membrane interaction. These two tetramers assemble into a soluble octamer with a pseudo-bilayer of lipids captured within. Interacts with COQ7; this interaction allows ubiquinone (CoQ) isoprene intermediates presentation to COQ7 and facilitates the COQ7-mediated hydroxylase step. In response to mitochondrial stress, the precursor protein is ubiquitinated by the SIFI complex in the cytoplasm before mitochondrial import, leading to its degradation. Within the SIFI complex, UBR4 initiates ubiquitin chain that are further elongated or branched by KCMF1.

It is found in the mitochondrion. It participates in cofactor biosynthesis; ubiquinone biosynthesis. Its function is as follows. Membrane-associated protein that warps the membrane surface to access and bind aromatic isoprenes with high specificity, including ubiquinone (CoQ) isoprene intermediates and presents them directly to COQ7, therefore facilitating the COQ7-mediated hydroxylase step. Participates in the biosynthesis of coenzyme Q, also named ubiquinone, an essential lipid-soluble electron transporter for aerobic cellular respiration. In Bos taurus (Bovine), this protein is Ubiquinone biosynthesis protein COQ9, mitochondrial.